Consider the following 126-residue polypeptide: Fluoride-specific ion channel FluC (126 aa).

4 helical membrane passes run 4–24 (FMLL…RYLI), 35–55 (GFPY…GVLM), 71–91 (IIGL…MDNV), and 104–124 (LNIL…FQLM). G78 and T81 together coordinate Na(+).

The protein belongs to the fluoride channel Fluc/FEX (TC 1.A.43) family.

The protein resides in the cell inner membrane. The catalysed reaction is fluoride(in) = fluoride(out). Its activity is regulated as follows. Na(+) is not transported, but it plays an essential structural role and its presence is essential for fluoride channel function. Functionally, fluoride-specific ion channel. Important for reducing fluoride concentration in the cell, thus reducing its toxicity. The polypeptide is Fluoride-specific ion channel FluC (Aliivibrio salmonicida (strain LFI1238) (Vibrio salmonicida (strain LFI1238))).